Here is a 208-residue protein sequence, read N- to C-terminus: MQNLKVDESWGNACRQIVQAGQRMDQRGWVPATAGNLSCRLPDGRIAITRSGGHKGFLTDSDVIEITPDGVPVDPANRASAETLLHTQLYAHDPAIGAVLHGHSVAATILSMDEPSDAITLAGYEVLKVFEGQTTHDTSLELPLFHNDQDIARLATVVAPKLSDMRLGYLIRGHGVYVWGKDMFTALARLEGLEFLLACELARLQKKA.

Zn(2+) is bound by residues His101 and His103.

The protein belongs to the aldolase class II family. MtnB subfamily. Requires Zn(2+) as cofactor.

The catalysed reaction is 5-(methylsulfanyl)-D-ribulose 1-phosphate = 5-methylsulfanyl-2,3-dioxopentyl phosphate + H2O. It functions in the pathway amino-acid biosynthesis; L-methionine biosynthesis via salvage pathway; L-methionine from S-methyl-5-thio-alpha-D-ribose 1-phosphate: step 2/6. Functionally, catalyzes the dehydration of methylthioribulose-1-phosphate (MTRu-1-P) into 2,3-diketo-5-methylthiopentyl-1-phosphate (DK-MTP-1-P). The protein is Methylthioribulose-1-phosphate dehydratase of Gluconobacter oxydans (strain 621H) (Gluconobacter suboxydans).